Here is a 339-residue protein sequence, read N- to C-terminus: Catalase-related peroxidase (339 aa).

The first 31 residues, Met-1 to Ala-31, serve as a signal peptide directing secretion. His-58 is an active-site residue. Tyr-328 lines the heme pocket.

The protein belongs to the catalase family. Heme is required as a cofactor.

The protein localises to the periplasm. Its function is as follows. Has an organic peroxide-dependent peroxidase activity. This is Catalase-related peroxidase (srpA) from Synechococcus elongatus (strain ATCC 33912 / PCC 7942 / FACHB-805) (Anacystis nidulans R2).